Reading from the N-terminus, the 166-residue chain is Large ribosomal subunit protein uL10 (166 aa).

In terms of assembly, part of the ribosomal stalk of the 50S ribosomal subunit. The N-terminus interacts with L11 and 23S rRNA to form the base of the stalk. The C-terminus forms an elongated spine to which L12 dimers bind in a sequential fashion forming a pentameric L10(L12)2(L12)2 complex.

Forms part of the ribosomal stalk, playing a central role in the interaction of the ribosome with GTP-bound translation factors (such as IF-2, EF-Tu, EF-G and RF3). The sequence is that of Large ribosomal subunit protein uL10 (rplJ) from Bacillus subtilis (strain 168).